We begin with the raw amino-acid sequence, 255 residues long: 5-oxoprolinase subunit A (255 aa).

Belongs to the LamB/PxpA family. Forms a complex composed of PxpA, PxpB and PxpC.

It catalyses the reaction 5-oxo-L-proline + ATP + 2 H2O = L-glutamate + ADP + phosphate + H(+). In terms of biological role, catalyzes the cleavage of 5-oxoproline to form L-glutamate coupled to the hydrolysis of ATP to ADP and inorganic phosphate. The sequence is that of 5-oxoprolinase subunit A from Campylobacter jejuni subsp. jejuni serotype O:2 (strain ATCC 700819 / NCTC 11168).